The following is a 347-amino-acid chain: NADH-ubiquinone oxidoreductase chain 2 (347 aa).

The next 11 membrane-spanning stretches (helical) occupy residues 3 to 23 (PPIL…VMLS), 25 to 45 (HWLL…PVLM), 66 to 86 (ASML…QWVV), 96 to 116 (IMMT…FWVP), 122 to 142 (ITLT…MSVL), 149 to 169 (INTN…GWGG), 178 to 198 (IMAY…IYNP), 201 to 221 (MILN…LFML), 237 to 257 (FPLI…LPPL), 274 to 294 (NMII…YFYL), and 323 to 343 (TILL…TPML).

The protein belongs to the complex I subunit 2 family. Core subunit of respiratory chain NADH dehydrogenase (Complex I) which is composed of 45 different subunits. Interacts with TMEM242.

Its subcellular location is the mitochondrion inner membrane. It catalyses the reaction a ubiquinone + NADH + 5 H(+)(in) = a ubiquinol + NAD(+) + 4 H(+)(out). In terms of biological role, core subunit of the mitochondrial membrane respiratory chain NADH dehydrogenase (Complex I) which catalyzes electron transfer from NADH through the respiratory chain, using ubiquinone as an electron acceptor. Essential for the catalytic activity and assembly of complex I. This Canis rufus (Red wolf) protein is NADH-ubiquinone oxidoreductase chain 2.